The following is a 143-amino-acid chain: Small ribosomal subunit protein uS12 (143 aa).

Over residues 1–15 (MGKCRGLRTARKLRD) the composition is skewed to basic residues. The interval 1-27 (MGKCRGLRTARKLRDHRREQKWHDKQY) is disordered. The span at 16–27 (HRREQKWHDKQY) shows a compositional bias: basic and acidic residues.

The protein belongs to the universal ribosomal protein uS12 family. As to quaternary structure, component of the 40S small ribosomal subunit.

It is found in the cytoplasm. It localises to the cytosol. The protein localises to the rough endoplasmic reticulum. The protein is Small ribosomal subunit protein uS12 (rps23) of Ictalurus punctatus (Channel catfish).